A 107-amino-acid polypeptide reads, in one-letter code: uncharacterized protein (107 aa).

This is an uncharacterized protein from Pasteurella multocida (strain Pm70).